Here is a 261-residue protein sequence, read N- to C-terminus: Cytochrome c oxidase subunit 3 (261 aa).

The next 6 membrane-spanning stretches (helical) occupy residues 31–51 (LVLW…LLLI), 82–102 (PMIL…WAFF), 126–146 (PFLV…TITW), 159–179 (AIQA…LQAW), 197–217 (FFVA…FLLV), and 239–259 (AWYW…IYWW).

It belongs to the cytochrome c oxidase subunit 3 family. As to quaternary structure, component of the cytochrome c oxidase (complex IV, CIV), a multisubunit enzyme composed of a catalytic core of 3 subunits and several supernumerary subunits. The complex exists as a monomer or a dimer and forms supercomplexes (SCs) in the inner mitochondrial membrane with ubiquinol-cytochrome c oxidoreductase (cytochrome b-c1 complex, complex III, CIII).

The protein localises to the mitochondrion inner membrane. It catalyses the reaction 4 Fe(II)-[cytochrome c] + O2 + 8 H(+)(in) = 4 Fe(III)-[cytochrome c] + 2 H2O + 4 H(+)(out). In terms of biological role, component of the cytochrome c oxidase, the last enzyme in the mitochondrial electron transport chain which drives oxidative phosphorylation. The respiratory chain contains 3 multisubunit complexes succinate dehydrogenase (complex II, CII), ubiquinol-cytochrome c oxidoreductase (cytochrome b-c1 complex, complex III, CIII) and cytochrome c oxidase (complex IV, CIV), that cooperate to transfer electrons derived from NADH and succinate to molecular oxygen, creating an electrochemical gradient over the inner membrane that drives transmembrane transport and the ATP synthase. Cytochrome c oxidase is the component of the respiratory chain that catalyzes the reduction of oxygen to water. Electrons originating from reduced cytochrome c in the intermembrane space (IMS) are transferred via the dinuclear copper A center (CU(A)) of subunit 2 and heme A of subunit 1 to the active site in subunit 1, a binuclear center (BNC) formed by heme A3 and copper B (CU(B)). The BNC reduces molecular oxygen to 2 water molecules using 4 electrons from cytochrome c in the IMS and 4 protons from the mitochondrial matrix. This chain is Cytochrome c oxidase subunit 3 (COIII), found in Paracentrotus lividus (Common sea urchin).